Reading from the N-terminus, the 205-residue chain is ATP phosphoribosyltransferase (205 aa).

It belongs to the ATP phosphoribosyltransferase family. Short subfamily. Heteromultimer composed of HisG and HisZ subunits.

The protein resides in the cytoplasm. It carries out the reaction 1-(5-phospho-beta-D-ribosyl)-ATP + diphosphate = 5-phospho-alpha-D-ribose 1-diphosphate + ATP. It functions in the pathway amino-acid biosynthesis; L-histidine biosynthesis; L-histidine from 5-phospho-alpha-D-ribose 1-diphosphate: step 1/9. Functionally, catalyzes the condensation of ATP and 5-phosphoribose 1-diphosphate to form N'-(5'-phosphoribosyl)-ATP (PR-ATP). Has a crucial role in the pathway because the rate of histidine biosynthesis seems to be controlled primarily by regulation of HisG enzymatic activity. This chain is ATP phosphoribosyltransferase, found in Helicobacter hepaticus (strain ATCC 51449 / 3B1).